The primary structure comprises 400 residues: GTPase Obg (400 aa).

In terms of domain architecture, Obg spans 1-159; sequence MKFVDEVQIR…RTLKLELLLL (159 aa). An OBG-type G domain is found at 160 to 333; the sequence is ADVGMLGLPN…VCYDILDLLD (174 aa). GTP-binding positions include 166 to 173, 191 to 195, 213 to 216, 283 to 286, and 314 to 316; these read GLPNAGKS, FTTLV, DIPG, NKMD, and TAI. Mg(2+)-binding residues include S173 and T193.

It belongs to the TRAFAC class OBG-HflX-like GTPase superfamily. OBG GTPase family. In terms of assembly, monomer. Requires Mg(2+) as cofactor.

The protein resides in the cytoplasm. In terms of biological role, an essential GTPase which binds GTP, GDP and possibly (p)ppGpp with moderate affinity, with high nucleotide exchange rates and a fairly low GTP hydrolysis rate. Plays a role in control of the cell cycle, stress response, ribosome biogenesis and in those bacteria that undergo differentiation, in morphogenesis control. The chain is GTPase Obg from Aeromonas hydrophila subsp. hydrophila (strain ATCC 7966 / DSM 30187 / BCRC 13018 / CCUG 14551 / JCM 1027 / KCTC 2358 / NCIMB 9240 / NCTC 8049).